Reading from the N-terminus, the 182-residue chain is Large ribosomal subunit protein uL6 (182 aa).

This sequence belongs to the universal ribosomal protein uL6 family. In terms of assembly, part of the 50S ribosomal subunit.

In terms of biological role, this protein binds to the 23S rRNA, and is important in its secondary structure. It is located near the subunit interface in the base of the L7/L12 stalk, and near the tRNA binding site of the peptidyltransferase center. The chain is Large ribosomal subunit protein uL6 from Caldicellulosiruptor saccharolyticus (strain ATCC 43494 / DSM 8903 / Tp8T 6331).